The primary structure comprises 183 residues: Peptide deformylase (183 aa).

Fe cation is bound by residues cysteine 111 and histidine 154. Glutamate 155 is a catalytic residue. A Fe cation-binding site is contributed by histidine 158.

This sequence belongs to the polypeptide deformylase family. Fe(2+) serves as cofactor.

The enzyme catalyses N-terminal N-formyl-L-methionyl-[peptide] + H2O = N-terminal L-methionyl-[peptide] + formate. Removes the formyl group from the N-terminal Met of newly synthesized proteins. Requires at least a dipeptide for an efficient rate of reaction. N-terminal L-methionine is a prerequisite for activity but the enzyme has broad specificity at other positions. The protein is Peptide deformylase of Staphylococcus epidermidis (strain ATCC 35984 / DSM 28319 / BCRC 17069 / CCUG 31568 / BM 3577 / RP62A).